The following is a 213-amino-acid chain: Orotate phosphoribosyltransferase (213 aa).

Lysine 26 is a 5-phospho-alpha-D-ribose 1-diphosphate binding site. An orotate-binding site is contributed by 34-35 (FF). 5-phospho-alpha-D-ribose 1-diphosphate-binding positions include 72 to 73 (YK), arginine 99, lysine 100, lysine 103, histidine 105, and 124 to 132 (DDVITAGTA). Threonine 128 and arginine 156 together coordinate orotate.

This sequence belongs to the purine/pyrimidine phosphoribosyltransferase family. PyrE subfamily. As to quaternary structure, homodimer. Mg(2+) serves as cofactor.

It catalyses the reaction orotidine 5'-phosphate + diphosphate = orotate + 5-phospho-alpha-D-ribose 1-diphosphate. It functions in the pathway pyrimidine metabolism; UMP biosynthesis via de novo pathway; UMP from orotate: step 1/2. In terms of biological role, catalyzes the transfer of a ribosyl phosphate group from 5-phosphoribose 1-diphosphate to orotate, leading to the formation of orotidine monophosphate (OMP). The chain is Orotate phosphoribosyltransferase from Salmonella agona (strain SL483).